Consider the following 506-residue polypeptide: MSSDESSDGLEELQSLKALYGQQEQEKPAKIKRERYIPKASQAKELNYVEVPMEKVLFGDRQRLLTNLAKSVGQKLPNDDEDEQEENPGQAKPGDKRKAAWSDSDDEDLQVGDVKKATKHTGPLNHLRKDKSYKEYLTARFQRTLNQPKWAEKKVKNEDDEDVSSDEELLRTVGFIDRKARNSDLPQKTLNFKRVKDLNRATYAEGNATSIQFHPTSTAALVAGMNGLATIYAVDGQKNERLHNMRFKKFPLACSRIAPCGTRAFFGSVKPFYYSYDLLEAKESKLKLPGAMEFMHRFEVSPCGKFIVTAGKFGAIHLLTAKTNELLHSFKQEGKVKGFTWSSDSKRILVCGSTSNVSVLNLRQNLIEHIFMDDGCIHGESIQLSPNQRLLATGSQEGVVNIYDYESIFASKAPQPEKRFMNLRTAITDLQFNHSSELLAMCSSEAPNAFKLAHFPSATVYSNFPAQNEKVGFVTSMAFSPHSSFLAFATKGKQVPLFRLKYFKGY.

Over residues 1 to 11 (MSSDESSDGLE) the composition is skewed to acidic residues. Disordered regions lie at residues 1 to 44 (MSSD…SQAK) and 69 to 126 (AKSV…PLNH). A compositionally biased stretch (basic and acidic residues) spans 24–37 (EQEKPAKIKRERYI). A phosphoserine mark is found at Ser-102, Ser-104, Ser-164, and Ser-165. WD repeat units follow at residues 203-242 (YAEG…NERL), 331-370 (KQEG…IEHI), 372-413 (MDDG…ASKA), and 469-505 (EKVG…YFKG).

The protein belongs to the WD repeat UTP18 family. As to quaternary structure, component of U3 snoRNP complex.

It is found in the nucleus. The protein resides in the nucleolus. Component of a nucleolar small nuclear ribonucleoprotein particle (snoRNP) thought to participate in the processing and modification of pre-ribosomal RNA. Regulation of cell size by ribosome synthesis is an important parameter for stem cell maintenance and function. The chain is U3 small nucleolar RNA-associated protein 18 homolog (wcd) from Drosophila melanogaster (Fruit fly).